Here is a 284-residue protein sequence, read N- to C-terminus: 2-dehydro-3-deoxyphosphooctonate aldolase (284 aa).

The protein belongs to the KdsA family.

Its subcellular location is the cytoplasm. It catalyses the reaction D-arabinose 5-phosphate + phosphoenolpyruvate + H2O = 3-deoxy-alpha-D-manno-2-octulosonate-8-phosphate + phosphate. Its pathway is carbohydrate biosynthesis; 3-deoxy-D-manno-octulosonate biosynthesis; 3-deoxy-D-manno-octulosonate from D-ribulose 5-phosphate: step 2/3. It functions in the pathway bacterial outer membrane biogenesis; lipopolysaccharide biosynthesis. This Actinobacillus succinogenes (strain ATCC 55618 / DSM 22257 / CCUG 43843 / 130Z) protein is 2-dehydro-3-deoxyphosphooctonate aldolase.